A 358-amino-acid chain; its full sequence is MIIKPIASPARYFLRTPSWSAVAIFQAVKIKPLQLRTNSSNSVTPNLISPSKKSWKDLFSKRWQYYAEISRAGSPTGTYLLYSPCTWSILMAAYAYDSSLVNVTKMLALFGVGSFLMRSAGCVINDLWDRELDAKVERSKSRPLASGKLSVRQAISLLSVQLTASLGILLQLNPYTIKLGVASLVPVCIYPAMKRITYYPQVVLGLTFGYGAVMGWPALAGEACMNWSVVAPLYLSTISWIVLYDTIYAHQDKRDDVKANIYSTALRFGDNTKPVLCGLAALQIATLATAGIMNGQGPVFYTLGVAGAAYRLSSMIYKVDLDDPKDCFRWFKRNSNTGYLVAAAIALDWLAKSFIYDS.

Residues 1–20 (MIIKPIASPARYFLRTPSWS) constitute a mitochondrion transit peptide. 7 consecutive transmembrane segments (helical) span residues 76–96 (TGTY…AYAY), 107–127 (LALF…INDL), 154–174 (AISL…QLNP), 202–222 (VVLG…LAGE), 229–249 (VVAP…TIYA), 275–295 (VLCG…IMNG), and 336–356 (NTGY…SFIY).

Belongs to the UbiA prenyltransferase family. It depends on Mg(2+) as a cofactor.

Its subcellular location is the mitochondrion. The protein resides in the mitochondrion inner membrane. The enzyme catalyses an all-trans-polyprenyl diphosphate + 4-hydroxybenzoate = a 4-hydroxy-3-(all-trans-polyprenyl)benzoate + diphosphate. It functions in the pathway cofactor biosynthesis; ubiquinone biosynthesis. Its function is as follows. Catalyzes the prenylation of para-hydroxybenzoate (PHB) with an all-trans polyprenyl group. Mediates the second step in the final reaction sequence of coenzyme Q (CoQ) biosynthesis, which is the condensation of the polyisoprenoid side chain with PHB, generating the first membrane-bound Q intermediate. The sequence is that of 4-hydroxybenzoate polyprenyltransferase, mitochondrial from Schizosaccharomyces pombe (strain 972 / ATCC 24843) (Fission yeast).